Here is a 210-residue protein sequence, read N- to C-terminus: Large ribosomal subunit protein bL25 (210 aa).

The disordered stretch occupies residues 1–23 (MSDIGTLSAKGRDRAGKGAARAT).

Belongs to the bacterial ribosomal protein bL25 family. CTC subfamily. As to quaternary structure, part of the 50S ribosomal subunit; part of the 5S rRNA/L5/L18/L25 subcomplex. Contacts the 5S rRNA. Binds to the 5S rRNA independently of L5 and L18.

This is one of the proteins that binds to the 5S RNA in the ribosome where it forms part of the central protuberance. This chain is Large ribosomal subunit protein bL25, found in Rhodospirillum rubrum (strain ATCC 11170 / ATH 1.1.1 / DSM 467 / LMG 4362 / NCIMB 8255 / S1).